A 421-amino-acid polypeptide reads, in one-letter code: UDP-N-acetylglucosamine 1-carboxyvinyltransferase (421 aa).

Phosphoenolpyruvate is bound at residue 22–23 (KN). Arg-92 serves as a coordination point for UDP-N-acetyl-alpha-D-glucosamine. The Proton donor role is filled by Cys-116. 2-(S-cysteinyl)pyruvic acid O-phosphothioketal is present on Cys-116. Residues 121 to 125 (RPVDQ), Asp-304, and Ile-326 contribute to the UDP-N-acetyl-alpha-D-glucosamine site.

Belongs to the EPSP synthase family. MurA subfamily.

It is found in the cytoplasm. The catalysed reaction is phosphoenolpyruvate + UDP-N-acetyl-alpha-D-glucosamine = UDP-N-acetyl-3-O-(1-carboxyvinyl)-alpha-D-glucosamine + phosphate. It functions in the pathway cell wall biogenesis; peptidoglycan biosynthesis. Its function is as follows. Cell wall formation. Adds enolpyruvyl to UDP-N-acetylglucosamine. This is UDP-N-acetylglucosamine 1-carboxyvinyltransferase from Bordetella avium (strain 197N).